The primary structure comprises 470 residues: Tryptophan synthase beta chain 1, chloroplastic (470 aa).

Residues 1–10 (MAASGTSATF) are compositionally biased toward polar residues. The disordered stretch occupies residues 1-24 (MAASGTSATFRASVSSAPSSSSQL). Residues 12–22 (ASVSSAPSSSS) are compositionally biased toward low complexity. An N6-(pyridoxal phosphate)lysine modification is found at Lys165.

It belongs to the TrpB family. As to quaternary structure, tetramer of two alpha and two beta chains. Pyridoxal 5'-phosphate serves as cofactor.

The protein resides in the plastid. Its subcellular location is the chloroplast. It catalyses the reaction (1S,2R)-1-C-(indol-3-yl)glycerol 3-phosphate + L-serine = D-glyceraldehyde 3-phosphate + L-tryptophan + H2O. It functions in the pathway amino-acid biosynthesis; L-tryptophan biosynthesis; L-tryptophan from chorismate: step 5/5. Functionally, the beta subunit is responsible for the synthesis of L-tryptophan from indole and L-serine. This is Tryptophan synthase beta chain 1, chloroplastic (TSB1) from Arabidopsis thaliana (Mouse-ear cress).